The chain runs to 178 residues: Large ribosomal subunit protein uL6 (178 aa).

Belongs to the universal ribosomal protein uL6 family. Part of the 50S ribosomal subunit.

In terms of biological role, this protein binds to the 23S rRNA, and is important in its secondary structure. It is located near the subunit interface in the base of the L7/L12 stalk, and near the tRNA binding site of the peptidyltransferase center. The sequence is that of Large ribosomal subunit protein uL6 from Coxiella burnetii (strain CbuK_Q154) (Coxiella burnetii (strain Q154)).